Here is a 241-residue protein sequence, read N- to C-terminus: Probable transcriptional regulatory protein H16_A0916 (241 aa).

This sequence belongs to the TACO1 family.

Its subcellular location is the cytoplasm. The polypeptide is Probable transcriptional regulatory protein H16_A0916 (Cupriavidus necator (strain ATCC 17699 / DSM 428 / KCTC 22496 / NCIMB 10442 / H16 / Stanier 337) (Ralstonia eutropha)).